The sequence spans 750 residues: Photosystem I P700 chlorophyll a apoprotein A1 (750 aa).

The next 8 helical transmembrane spans lie at 70 to 93 (VFSA…FHGA), 156 to 179 (LYCT…FHYH), 195 to 219 (LNHH…HVSL), 291 to 309 (IAHH…GHMY), 346 to 369 (WHAQ…HHMY), 385 to 411 (LSLF…IFMV), 433 to 455 (AIIS…LYIH), and 531 to 549 (FLVH…LILL). Positions 573 and 582 each coordinate [4Fe-4S] cluster. A run of 2 helical transmembrane segments spans residues 589–610 (HVFL…HFSW) and 664–686 (LSAY…MFLF). Chlorophyll a' is bound at residue H675. Positions 683 and 691 each coordinate chlorophyll a. W692 provides a ligand contact to phylloquinone. Residues 724 to 744 (AVGVTHYLLGGIATTWAFFLA) traverse the membrane as a helical segment.

It belongs to the PsaA/PsaB family. In terms of assembly, the PsaA/B heterodimer binds the P700 chlorophyll special pair and subsequent electron acceptors. PSI consists of a core antenna complex that captures photons, and an electron transfer chain that converts photonic excitation into a charge separation. The eukaryotic PSI reaction center is composed of at least 11 subunits. Requires P700 is a chlorophyll a/chlorophyll a' dimer, A0 is one or more chlorophyll a, A1 is one or both phylloquinones and FX is a shared 4Fe-4S iron-sulfur center. as cofactor.

The protein localises to the plastid. The protein resides in the chloroplast thylakoid membrane. It carries out the reaction reduced [plastocyanin] + hnu + oxidized [2Fe-2S]-[ferredoxin] = oxidized [plastocyanin] + reduced [2Fe-2S]-[ferredoxin]. Its function is as follows. PsaA and PsaB bind P700, the primary electron donor of photosystem I (PSI), as well as the electron acceptors A0, A1 and FX. PSI is a plastocyanin-ferredoxin oxidoreductase, converting photonic excitation into a charge separation, which transfers an electron from the donor P700 chlorophyll pair to the spectroscopically characterized acceptors A0, A1, FX, FA and FB in turn. Oxidized P700 is reduced on the lumenal side of the thylakoid membrane by plastocyanin. In Aethionema cordifolium (Lebanon stonecress), this protein is Photosystem I P700 chlorophyll a apoprotein A1.